A 739-amino-acid chain; its full sequence is Conserved oligomeric Golgi complex subunit 6 (739 aa).

Disordered stretches follow at residues 1 to 35 (MATG…LQQR) and 686 to 706 (VGQS…DGDG). Residues 693–706 (VNEEGEEGDGDGDG) show a composition bias toward acidic residues.

Belongs to the COG6 family.

The protein localises to the golgi apparatus membrane. Its function is as follows. Acts as a component of the peripheral membrane COG complex that is involved in intra-Golgi protein trafficking. COG is located at the cis-Golgi, and regulates tethering of retrograde intra-Golgi vesicles and possibly a number of other membrane trafficking events. This chain is Conserved oligomeric Golgi complex subunit 6 (cog6), found in Emericella nidulans (strain FGSC A4 / ATCC 38163 / CBS 112.46 / NRRL 194 / M139) (Aspergillus nidulans).